The chain runs to 258 residues: Beta carbonic anhydrase 3 (258 aa).

The N-terminal stretch at methionine 1–alanine 28 is a signal peptide. Residues glycine 24 to serine 54 are a coiled coil. Threonine 35 is subject to Phosphothreonine. A Phosphoserine modification is found at serine 95. The residue at position 201 (cysteine 201) is an S-nitrosocysteine.

Belongs to the beta-class carbonic anhydrase family. In terms of tissue distribution, strongly expressed in aerial tissues including leaves, stems, flowers and siliques, and, to a lower extent, in roots.

The protein localises to the cytoplasm. Its subcellular location is the cytosol. It carries out the reaction hydrogencarbonate + H(+) = CO2 + H2O. Reversible hydration of carbon dioxide. This chain is Beta carbonic anhydrase 3 (BCA3), found in Arabidopsis thaliana (Mouse-ear cress).